The chain runs to 307 residues: UPF0282 protein PH1002 (307 aa).

This sequence belongs to the UPF0282 family.

This is UPF0282 protein PH1002 from Pyrococcus horikoshii (strain ATCC 700860 / DSM 12428 / JCM 9974 / NBRC 100139 / OT-3).